Reading from the N-terminus, the 491-residue chain is Ketol-acid reductoisomerase (NADP(+)) (491 aa).

In terms of domain architecture, KARI N-terminal Rossmann spans 15-208 (AQLGKCRFMG…GGHRAGVLES (194 aa)). NADP(+) contacts are provided by residues 45-48 (CGAQ), Arg-68, Arg-76, Ser-78, and 108-110 (DKQ). His-132 is a catalytic residue. Position 158 (Gly-158) interacts with NADP(+). 2 consecutive KARI C-terminal knotted domains span residues 209-344 (SFVA…TAPQ) and 345-484 (FEGK…MTDM). Residues Asp-217, Glu-221, Glu-389, and Glu-393 each coordinate Mg(2+). Residue Ser-414 participates in substrate binding.

Belongs to the ketol-acid reductoisomerase family. Requires Mg(2+) as cofactor.

It catalyses the reaction (2R)-2,3-dihydroxy-3-methylbutanoate + NADP(+) = (2S)-2-acetolactate + NADPH + H(+). It carries out the reaction (2R,3R)-2,3-dihydroxy-3-methylpentanoate + NADP(+) = (S)-2-ethyl-2-hydroxy-3-oxobutanoate + NADPH + H(+). Its pathway is amino-acid biosynthesis; L-isoleucine biosynthesis; L-isoleucine from 2-oxobutanoate: step 2/4. The protein operates within amino-acid biosynthesis; L-valine biosynthesis; L-valine from pyruvate: step 2/4. In terms of biological role, involved in the biosynthesis of branched-chain amino acids (BCAA). Catalyzes an alkyl-migration followed by a ketol-acid reduction of (S)-2-acetolactate (S2AL) to yield (R)-2,3-dihydroxy-isovalerate. In the isomerase reaction, S2AL is rearranged via a Mg-dependent methyl migration to produce 3-hydroxy-3-methyl-2-ketobutyrate (HMKB). In the reductase reaction, this 2-ketoacid undergoes a metal-dependent reduction by NADPH to yield (R)-2,3-dihydroxy-isovalerate. The protein is Ketol-acid reductoisomerase (NADP(+)) of Salmonella heidelberg (strain SL476).